Here is a 596-residue protein sequence, read N- to C-terminus: MTCLILWYLWLISTFQLEFATASTANTTTTAKSGTSSSTEEPFPVLAVGKDGRGNYYVNSTFGTPGQRQRLLVDIIQPYINLVSGTSESHNEYSGVYHKHPSYLMNDSTSSVPVSPGQIYEISFIDGRAVNCTLVTDDMNFTNVSSENSSTALITDLMVTRDNVQFNSGSLSISNVSFFDIQSSNFKTSGLLGLSGKVTNPGNAIDSSQYTEQSYFLSLLKDADIIESSSYSLWLAGDTSTYKTYRDPISNCGKLLLGGVDPSLFTGTLGKFDLIPYVDPVSNAVSVGYPIVPLGPIYIVSNSGQSLNMTSKDFLSPALLDSTSSVSYLPTSTIIQIAVQIAATYVESLDRWLVQCSIADMGVSLGFRLRELTIEIPLRDLLSSTYDTSTNSSMFFSSGQEACFLTLYANTNTGVNILGEAFIKNIYMAMDLEDNTIAIAQAKKVEDDAVTEETNETTASTIIKKIKSGYIPYAKVMNSSNTRNLTLYPSYRSGYMFTVPGQLTAAYSNGVITGAGRSFYDTSRASTSARPSSTQFDSFSVSASEEWSNSTNRTSSASGAGVRLSSPYTFNKDPAGHVTRIASLLLLSIFSILIVL.

A signal peptide spans 1–25 (MTCLILWYLWLISTFQLEFATASTA). N-linked (GlcNAc...) asparagine glycosylation is found at Asn-26 and Asn-59. Residues 26–575 (NTTTTAKSGT…SPYTFNKDPA (550 aa)) are Lumenal-facing. One can recognise a Peptidase A1 domain in the interval 56–440 (YYVNSTFGTP…DLEDNTIAIA (385 aa)). The active site involves Asp-74. N-linked (GlcNAc...) asparagine glycans are attached at residues Asn-106, Asn-131, Asn-140, Asn-143, Asn-148, Asn-175, and Asn-308. Residue Asp-321 is part of the active site. 6 N-linked (GlcNAc...) asparagine glycosylation sites follow: Asn-391, Asn-455, Asn-478, Asn-484, Asn-549, and Asn-552. The helical transmembrane segment at 576–596 (GHVTRIASLLLLSIFSILIVL) threads the bilayer.

This sequence belongs to the peptidase A1 family.

It localises to the cytoplasm. The protein localises to the endoplasmic reticulum membrane. The protein is Aspartic proteinase yapsin-7 (YPS7) of Saccharomyces cerevisiae (strain ATCC 204508 / S288c) (Baker's yeast).